Consider the following 131-residue polypeptide: Ribosome-binding factor A (131 aa).

This sequence belongs to the RbfA family. In terms of assembly, monomer. Binds 30S ribosomal subunits, but not 50S ribosomal subunits or 70S ribosomes.

It is found in the cytoplasm. In terms of biological role, one of several proteins that assist in the late maturation steps of the functional core of the 30S ribosomal subunit. Associates with free 30S ribosomal subunits (but not with 30S subunits that are part of 70S ribosomes or polysomes). Required for efficient processing of 16S rRNA. May interact with the 5'-terminal helix region of 16S rRNA. In Christiangramia forsetii (strain DSM 17595 / CGMCC 1.15422 / KT0803) (Gramella forsetii), this protein is Ribosome-binding factor A.